The primary structure comprises 282 residues: Nucleotide-binding protein Ping_2894 (282 aa).

8-15 (GRSGSGKT) lines the ATP pocket. 56–59 (DIRN) contributes to the GTP binding site.

The protein belongs to the RapZ-like family.

Displays ATPase and GTPase activities. The protein is Nucleotide-binding protein Ping_2894 of Psychromonas ingrahamii (strain DSM 17664 / CCUG 51855 / 37).